A 512-amino-acid polypeptide reads, in one-letter code: MFAFSKGPAGSSTYDRVAQKFQDGYEKMRAAIEMDELTKHAGSIQEKLRTAELYKEARSLLKEANEFNIMDIPETRRSEIRDKRQNMMKLEKSAQDRLIAICNEVDPNVKQSRSATVGPSRPASAARVTPRPTRATAPEKKNAAKAKENDENRHVCSRGDRCGAHHQPVTKKSDTVHPEPPVQASNRKMETVKRVKVDKASLPMHQNPVNRAALLNGVDKVIGERLLDEVLDNTGVRMDDVAGCHSAKAALEEAVILPALNPNLFKGLRQPVKGILLFGPPGNGKTLLAKAVAGESKQMFFNISASSLTSKWVGDSEKTIRGLFQIARNAQPSIIFIDEIDSILCERSEKDAEVSRRMKTEFLVQFDGATSSADDRILVIGATNRPHELDDAVLRRFPKRIMLNLPDEEARKELITKTLKKHNMMDGLISSDIRYIASNTSGFSNSDLVALCKEAAMVPIREIDRSKLSMTDGEKIRKIRASDFDTALRTIRPSTSQKIMSKLSDFSRSFGC.

At 1 to 274 (MFAFSKGPAG…FKGLRQPVKG (274 aa)) the chain is on the cytoplasmic side. A coiled-coil region spans residues 32 to 97 (IEMDELTKHA…MKLEKSAQDR (66 aa)). Positions 110 to 182 (KQSRSATVGP…SDTVHPEPPV (73 aa)) are disordered. An MTBD region spans residues 115 to 233 (ATVGPSRPAS…ERLLDEVLDN (119 aa)). Residues 137-163 (APEKKNAAKAKENDENRHVCSRGDRCG) are compositionally biased toward basic and acidic residues. Positions 275–294 (ILLFGPPGNGKTLLAKAVAG) form an intramembrane region, helical. Position 279 to 286 (279 to 286 (GPPGNGKT)) interacts with ATP. Residues 295–512 (ESKQMFFNIS…LSDFSRSFGC (218 aa)) lie on the Cytoplasmic side of the membrane.

The protein belongs to the AAA ATPase family. Spastin subfamily. In terms of assembly, homohexamer. The homohexamer is stabilized by ATP-binding. The homohexamer may adopt a ring conformation through which microtubules pass prior to being severed. Interacts with microtubules. Interacts (via N-terminus) with tubulin; the interaction is direct.

The protein resides in the membrane. Its subcellular location is the cytoplasm. It is found in the cytoskeleton. The protein localises to the perinuclear region. The catalysed reaction is n ATP + n H2O + a microtubule = n ADP + n phosphate + (n+1) alpha/beta tubulin heterodimers.. Its function is as follows. ATP-dependent microtubule severing protein that specifically recognizes and cuts microtubules. Probably by regulating microtubule remodeling, plays a role in new synapse formation in GABAergic DD (Dorsal D type) neurons. This is Spastin homolog from Caenorhabditis elegans.